Reading from the N-terminus, the 496-residue chain is Sugar transporter ERD6 (496 aa).

Transmembrane regions (helical) follow at residues 58-78 (VFLS…GVGF), 94-114 (VAEY…GAVF), 128-148 (MLFC…AQNA), 156-176 (LLLG…IAEI), 183-203 (GSFV…FFII), and 211-231 (LLTV…FFIP). A Phosphoserine modification is found at Ser-256. 6 consecutive transmembrane segments (helical) span residues 292-312 (YPLI…SSGV), 329-349 (IGTS…TVLV), 364-384 (AMGL…FGIL), 394-414 (IGVL…PWII), 430-450 (LVTV…NFML), and 456-476 (GMFL…YFLV).

This sequence belongs to the major facilitator superfamily. Sugar transporter (TC 2.A.1.1) family. As to expression, expressed in both shoots and roots. In roots, expressed in epidermal cells and especially strongly in cortex cells. In flowers, expressed in sepals.

It localises to the membrane. Its function is as follows. Sugar transporter. The polypeptide is Sugar transporter ERD6 (ERD6) (Arabidopsis thaliana (Mouse-ear cress)).